The chain runs to 353 residues: Quinolinate synthase (353 aa).

Iminosuccinate-binding residues include His-47 and Ser-68. A [4Fe-4S] cluster-binding site is contributed by Cys-113. Iminosuccinate contacts are provided by residues 139 to 141 and Ser-156; that span reads YAN. Cys-200 is a [4Fe-4S] cluster binding site. Iminosuccinate is bound by residues 226–228 and Thr-243; that span reads HPE. Residue Cys-297 coordinates [4Fe-4S] cluster.

The protein belongs to the quinolinate synthase family. Type 1 subfamily. [4Fe-4S] cluster is required as a cofactor.

It localises to the cytoplasm. It catalyses the reaction iminosuccinate + dihydroxyacetone phosphate = quinolinate + phosphate + 2 H2O + H(+). It functions in the pathway cofactor biosynthesis; NAD(+) biosynthesis; quinolinate from iminoaspartate: step 1/1. Its function is as follows. Catalyzes the condensation of iminoaspartate with dihydroxyacetone phosphate to form quinolinate. This Vibrio vulnificus (strain YJ016) protein is Quinolinate synthase.